A 1382-amino-acid chain; its full sequence is MEVKMDELVLDVDVEEATGSELLVKSEPEADLNAVKSSTDLVTVTGPIGKNGEGESSPSEPKWLQQDEPIALWVKWRGKWQAGIRCAKADWPLTTLRGKPTHDRKKYCVIFFPHTKNYSWADMQLVRSINEFPDPIAYKSHKIGLKLVKDLTAARRYIMRKLTVGMFNIVDQFPSEVVSEAARDIIIWKEFAMEATRSTSYHDLGIMLVKLHSMILQRYMDPIWLENSFPLWVQKCNNAVNAESIELLNEEFDNCIKWNEVKSLSESPMQPMLLSEWKTWKHDIAKWFSISRRGVGEIAQPDSKSVFNSDVQASRKRPKLEIRRAETTNATHMESDTSPQGLSAIDSEFFSSRGNTNSPETMKEENPVMNTPENGLDLWDGIVVEAGGSQFMKTKETNGLSHPQDQHINESVLKKPFGSGNKSQQCIAFIESKGRQCVRWANEGDVYCCVHLASRFTTKSMKNEGSPAVEAPMCGGVTVLGTKCKHRSLPGFLYCKKHRPHTGMVKPDDSSSFLVKRKVSEIMSTLETNQCQDLVPFGEPEGPSFEKQEPHGATSFTEMFEHCSQEDNLCIGSCSENSYISCSEFSTKHSLYCEQHLPNWLKRARNGKSRIISKEVFVDLLRGCLSREEKLALHQACDIFYKLFKSVLSLRNSVPMEVQIDWAKTEASRNADAGVGEFLMKLVSNERERLTRIWGFATGADEEDVSLSEYPNRLLAITNTCDDDDDKEKWSFSGFACAICLDSFVRRKLLEIHVEERHHVQFAEKCMLLQCIPCGSHFGDKEQLLVHVQAVHPSECKSLTVASECNLTNGEFSQKPEAGSSQIVVSQNNENTSGVHKFVCKFCGLKFNLLPDLGRHHQAEHMGPSLVGSRGPKKGIRFNTYRMKSGRLSRPNKFKKSLGAVSYRIRNRAGVNMKRRMQGSKSLGTEGNTEAGVSPPLDDSRNFDGVTDAHCSVVSDILLSKVQKAKHRPNNLDILSAARSACCRVSVETSLEAKFGDLPDRIYLKAAKLCGEQGVQVQWHQEGYICSNGCKPVKDPNLLHPLIPRQENDRFGIAVDAGQHSNIELEVDECHCIMEAHHFSKRPFGNTAVLCKDISFGKESVPICVVDDDLWNSEKPYEMPWECFTYVTNSILHPSMDLVKENLQLRCSCRSSVCSPVTCDHVYLFGNDFEDARDIYGKSMRCRFPYDGKQRIILEEGYPVYECNKFCGCSRTCQNRVLQNGIRAKLEVFRTESKGWGLRACEHILRGTFVCEYIGEVLDQQEANKRRNQYGNGDCSYILDIDANINDIGRLMEEELDYAIDATTHGNISRFINHSCSPNLVNHQVIVESMESPLAHIGLYASMDIAAGEEITRDYGRRPVPSEQENEHPCHCKATNCRGLLS.

2 disordered regions span residues 43–62 (TVTGPIGKNGEGESSPSEPK) and 354–373 (GNTNSPETMKEENPVMNTPE). C2H2-type zinc fingers lie at residues 735 to 758 (FACAICLDSFVRRKLLEIHVEERH), 769 to 792 (LQCIPCGSHFGDKEQLLVHVQAVH), and 838 to 861 (FVCKFCGLKFNLLPDLGRHHQAEH). Residues 915–935 (RRMQGSKSLGTEGNTEAGVSP) are disordered. Polar residues predominate over residues 919–928 (GSKSLGTEGN). One can recognise a Pre-SET domain in the interval 1145–1221 (LRCSCRSSVC…TCQNRVLQNG (77 aa)). 9 residues coordinate Zn(2+): Cys-1147, Cys-1149, Cys-1154, Cys-1159, Cys-1182, Cys-1203, Cys-1207, Cys-1209, and Cys-1213. An SET domain is found at 1224–1356 (AKLEVFRTES…AGEEITRDYG (133 aa)). S-adenosyl-L-methionine is bound by residues 1234 to 1236 (KGW), Tyr-1277, and 1313 to 1314 (NH). Residue Cys-1316 participates in Zn(2+) binding. Position 1355 (Tyr-1355) interacts with S-adenosyl-L-methionine. Residues 1366 to 1382 (NEHPCHCKATNCRGLLS) enclose the Post-SET domain. Zn(2+) is bound by residues Cys-1370, Cys-1372, and Cys-1377.

Belongs to the class V-like SAM-binding methyltransferase superfamily. As to quaternary structure, component of a regulatory complex with LDL1/SWP1. Interacts with LDL1/SWP1.

It localises to the nucleus. The protein localises to the chromosome. It catalyses the reaction L-lysyl-[histone] + S-adenosyl-L-methionine = N(6)-methyl-L-lysyl-[histone] + S-adenosyl-L-homocysteine + H(+). Functionally, histone methyltransferase that functions together with its binding partner LDL1/SWP1 as one of the regulators of flower timing in Arabidopsis. Mediates H3K9me2 deposition and regulates gene expression in a DNA methylation-independent manner. Binds DNA through its zinc fingers and represses the expression of a subset of stimulus response genes. May represent a novel mechanism for plants to regulate their chromatin and transcriptional state, which may allow for the adaptability and modulation necessary to rapidly respond to environment or developmental cues. In Arabidopsis thaliana (Mouse-ear cress), this protein is Histone-lysine N-methyltransferase SUVR5.